Reading from the N-terminus, the 449-residue chain is Putative transporter C83.11 (449 aa).

The next 9 helical transmembrane spans lie at 7 to 27 (LSHILFHEKVGFLLLCLLWYI), 47 to 67 (VTLTFLQFGFVAFFSAVCLLF), 84 to 104 (VLYTTLPLSIFQIGGHVFGSL), 109 to 129 (IPVSTVHTVKALSPLFTVLAY), 136 to 156 (VYSAMTYFSLVPLTFGVTLAC), 164 to 184 (IVGLLYALISTCIFVSQNIFG), 205 to 225 (LNLLLYSSGVAFIVMIPVWLY), 255 to 275 (ILAFTLLSIISPVAYSIASLI), and 278 to 298 (IFVIVVSIIWFQQATNFTQGS). Phosphoserine occurs at positions 348 and 352. Position 355 is a phosphotyrosine (Tyr-355). Over residues 382–415 (NSVYSNEGVTSSVSGNATPASVRQSTQNDFSNSN) the composition is skewed to polar residues. Residues 382–416 (NSVYSNEGVTSSVSGNATPASVRQSTQNDFSNSNI) form a disordered region.

Belongs to the TPT transporter family.

It is found in the membrane. This chain is Putative transporter C83.11, found in Schizosaccharomyces pombe (strain 972 / ATCC 24843) (Fission yeast).